Here is a 263-residue protein sequence, read N- to C-terminus: NH(3)-dependent NAD(+) synthetase (263 aa).

Residue 29 to 36 (GISGGIDS) coordinates ATP. Mg(2+) is bound at residue Asp35. Arg114 is a deamido-NAD(+) binding site. Thr134 serves as a coordination point for ATP. Glu139 contributes to the Mg(2+) binding site. Residues Lys147 and Asp154 each contribute to the deamido-NAD(+) site. 2 residues coordinate ATP: Lys163 and Ser185. Position 244-245 (244-245 (HK)) interacts with deamido-NAD(+).

It belongs to the NAD synthetase family. Homodimer.

It carries out the reaction deamido-NAD(+) + NH4(+) + ATP = AMP + diphosphate + NAD(+) + H(+). Its pathway is cofactor biosynthesis; NAD(+) biosynthesis; NAD(+) from deamido-NAD(+) (ammonia route): step 1/1. Catalyzes the ATP-dependent amidation of deamido-NAD to form NAD. Uses ammonia as a nitrogen source. This is NH(3)-dependent NAD(+) synthetase from Methanococcoides burtonii (strain DSM 6242 / NBRC 107633 / OCM 468 / ACE-M).